A 152-amino-acid chain; its full sequence is Large ribosomal subunit protein uL15 (152 aa).

The tract at residues Met-1–Gln-56 is disordered. Positions Ser-14–Arg-23 are enriched in basic residues. Gly residues predominate over residues Ile-25–Met-37.

This sequence belongs to the universal ribosomal protein uL15 family. Part of the 50S ribosomal subunit.

Its function is as follows. Binds to the 23S rRNA. This is Large ribosomal subunit protein uL15 from Prochlorococcus marinus (strain MIT 9515).